The chain runs to 222 residues: Probable transcriptional regulator ycf29 (222 aa).

Positions lysine 4–isoleucine 120 constitute a Response regulatory domain. Aspartate 53 is modified (4-aspartylphosphate). The HTH luxR-type domain maps to glutamine 139–asparagine 204. Positions asparagine 163–serine 182 form a DNA-binding region, H-T-H motif.

The protein localises to the plastid. The protein resides in the chloroplast. In Pyropia yezoensis (Susabi-nori), this protein is Probable transcriptional regulator ycf29 (ycf29).